The chain runs to 529 residues: Peptide chain release factor 3 (529 aa).

The tr-type G domain occupies 10 to 278; that stretch reads ARRRTFAIIS…NFVDLAPAPR (269 aa). GTP-binding positions include 19–26, 87–91, and 141–144; these read SHPDAGKT, DTPGH, and NKLD.

It belongs to the TRAFAC class translation factor GTPase superfamily. Classic translation factor GTPase family. PrfC subfamily.

The protein localises to the cytoplasm. Its function is as follows. Increases the formation of ribosomal termination complexes and stimulates activities of RF-1 and RF-2. It binds guanine nucleotides and has strong preference for UGA stop codons. It may interact directly with the ribosome. The stimulation of RF-1 and RF-2 is significantly reduced by GTP and GDP, but not by GMP. In Nitratidesulfovibrio vulgaris (strain ATCC 29579 / DSM 644 / CCUG 34227 / NCIMB 8303 / VKM B-1760 / Hildenborough) (Desulfovibrio vulgaris), this protein is Peptide chain release factor 3.